The sequence spans 542 residues: Chaperonin GroEL (542 aa).

ATP contacts are provided by residues 29-32 (TLGP), 86-90 (DGTTT), Gly-413, and Asp-494.

It belongs to the chaperonin (HSP60) family. As to quaternary structure, forms a cylinder of 14 subunits composed of two heptameric rings stacked back-to-back. Interacts with the co-chaperonin GroES.

Its subcellular location is the cytoplasm. It carries out the reaction ATP + H2O + a folded polypeptide = ADP + phosphate + an unfolded polypeptide.. Its function is as follows. Together with its co-chaperonin GroES, plays an essential role in assisting protein folding. The GroEL-GroES system forms a nano-cage that allows encapsulation of the non-native substrate proteins and provides a physical environment optimized to promote and accelerate protein folding. The chain is Chaperonin GroEL from Endomicrobium trichonymphae.